Reading from the N-terminus, the 506-residue chain is Maturase K (506 aa).

The protein belongs to the intron maturase 2 family. MatK subfamily.

It is found in the plastid. The protein resides in the chloroplast. Usually encoded in the trnK tRNA gene intron. Probably assists in splicing its own and other chloroplast group II introns. The polypeptide is Maturase K (Angiopteris evecta (Mule's foot fern)).